Consider the following 466-residue polypeptide: 3-isopropylmalate dehydratase large subunit (466 aa).

Residues Cys-347, Cys-407, and Cys-410 each coordinate [4Fe-4S] cluster.

Belongs to the aconitase/IPM isomerase family. LeuC type 1 subfamily. Heterodimer of LeuC and LeuD. [4Fe-4S] cluster is required as a cofactor.

It carries out the reaction (2R,3S)-3-isopropylmalate = (2S)-2-isopropylmalate. It functions in the pathway amino-acid biosynthesis; L-leucine biosynthesis; L-leucine from 3-methyl-2-oxobutanoate: step 2/4. In terms of biological role, catalyzes the isomerization between 2-isopropylmalate and 3-isopropylmalate, via the formation of 2-isopropylmaleate. In Escherichia coli O139:H28 (strain E24377A / ETEC), this protein is 3-isopropylmalate dehydratase large subunit.